The primary structure comprises 978 residues: NACHT, LRR and PYD domains-containing protein 4E (978 aa).

The 93-residue stretch at 1 to 93 (MASFFSDFGL…MERAGREIAG (93 aa)) folds into the Pyrin domain. The 324-residue stretch at 148–471 (HMVFLQGVAG…FHLLKSHVDH (324 aa)) folds into the NACHT domain. 154–161 (GVAGIGKS) is a binding site for ATP. LRR repeat units lie at residues 594 to 617 (CSTL…HSYT), 694 to 717 (LLNL…LNQA), 746 to 773 (SKML…LCHP), 802 to 825 (NKTL…VLCG), 859 to 882 (NQNL…LLCD), and 916 to 940 (CKTL…LFEA).

This sequence belongs to the NLRP family.

May be involved in inflammation and recognition of cytosolic pathogen-associated molecular patterns (PAMPs) not intercepted by membrane-bound receptors. This Mus musculus (Mouse) protein is NACHT, LRR and PYD domains-containing protein 4E (Nlrp4e).